The following is a 112-amino-acid chain: Protein F-112 (112 aa).

In terms of biological role, essential for virus function. In Saccharolobus solfataricus (Sulfolobus solfataricus), this protein is Protein F-112.